We begin with the raw amino-acid sequence, 171 residues long: Tetratricopeptide repeat protein 9C (171 aa).

TPR repeat units lie at residues 8-41, 72-107, and 108-141; these read AQLYKEEGNQRYREGKYRDAVSRYHRALLQLRGL, TDCYNNLAACLLQMEPVNYERVREYSQKVLERQPDN, and AKALYRAGVAFFHLQDYDQARHYLLAAVNRQPKD.

The protein belongs to the TTC9 family.

In Homo sapiens (Human), this protein is Tetratricopeptide repeat protein 9C (TTC9C).